The primary structure comprises 440 residues: Tyrosine--tRNA ligase (440 aa).

Residue Y46 participates in L-tyrosine binding. Positions 51–60 (PTAASLHIGN) match the 'HIGH' region motif. Residues Y181 and Q185 each coordinate L-tyrosine. Positions 241 to 245 (KFGKS) match the 'KMSKS' region motif. An ATP-binding site is contributed by K244. Residues 373 to 439 (DRVIDAAQAA…GKKALGAVEN (67 aa)) form the S4 RNA-binding domain.

It belongs to the class-I aminoacyl-tRNA synthetase family. TyrS type 1 subfamily. As to quaternary structure, homodimer.

The protein resides in the cytoplasm. It carries out the reaction tRNA(Tyr) + L-tyrosine + ATP = L-tyrosyl-tRNA(Tyr) + AMP + diphosphate + H(+). In terms of biological role, catalyzes the attachment of tyrosine to tRNA(Tyr) in a two-step reaction: tyrosine is first activated by ATP to form Tyr-AMP and then transferred to the acceptor end of tRNA(Tyr). This is Tyrosine--tRNA ligase from Bifidobacterium longum (strain NCC 2705).